The primary structure comprises 336 residues: Dihydroorotate dehydrogenase (quinone) (336 aa).

FMN is bound by residues 62–66 (AGLDK) and threonine 86. Lysine 66 lines the substrate pocket. 111-115 (NRMGF) is a substrate binding site. 2 residues coordinate FMN: asparagine 139 and asparagine 172. Substrate is bound at residue asparagine 172. Serine 175 acts as the Nucleophile in catalysis. Asparagine 177 is a binding site for substrate. The FMN site is built by lysine 217 and threonine 245. 246-247 (NT) provides a ligand contact to substrate. FMN-binding positions include glycine 268, glycine 297, and 318 to 319 (YS).

It belongs to the dihydroorotate dehydrogenase family. Type 2 subfamily. Monomer. The cofactor is FMN.

It is found in the cell membrane. The enzyme catalyses (S)-dihydroorotate + a quinone = orotate + a quinol. The protein operates within pyrimidine metabolism; UMP biosynthesis via de novo pathway; orotate from (S)-dihydroorotate (quinone route): step 1/1. Catalyzes the conversion of dihydroorotate to orotate with quinone as electron acceptor. The sequence is that of Dihydroorotate dehydrogenase (quinone) from Vibrio vulnificus (strain YJ016).